Consider the following 260-residue polypeptide: Proteasome subunit alpha (260 aa).

The protein belongs to the peptidase T1A family. In terms of assembly, the 20S proteasome core is composed of 14 alpha and 14 beta subunits that assemble into four stacked heptameric rings, resulting in a barrel-shaped structure. The two inner rings, each composed of seven catalytic beta subunits, are sandwiched by two outer rings, each composed of seven alpha subunits. The catalytic chamber with the active sites is on the inside of the barrel. Has a gated structure, the ends of the cylinder being occluded by the N-termini of the alpha-subunits. Is capped at one or both ends by the proteasome regulatory ATPase, PAN.

The protein resides in the cytoplasm. The formation of the proteasomal ATPase PAN-20S proteasome complex, via the docking of the C-termini of PAN into the intersubunit pockets in the alpha-rings, triggers opening of the gate for substrate entry. Interconversion between the open-gate and close-gate conformations leads to a dynamic regulation of the 20S proteasome proteolysis activity. Its function is as follows. Component of the proteasome core, a large protease complex with broad specificity involved in protein degradation. In Thermococcus onnurineus (strain NA1), this protein is Proteasome subunit alpha.